A 575-amino-acid chain; its full sequence is Hemagglutinin-neuraminidase (575 aa).

Over 1–34 (MAEKGKTNSSYWSTTRNDNSTVNTYIDTPAGKTH) the chain is Intravirion. The helical transmembrane segment at 35–55 (IWLLIATTMHTILSFIIMILC) threads the bilayer. The Virion surface segment spans residues 56 to 575 (IDLIIKQDTC…SIPKICKITS (520 aa)). N-linked (GlcNAc...) asparagine; by host glycosylation is present at N77. Disulfide bonds link C192-C216, C258-C271, C357-C469, and C463-C473. Residues 254–259 (NRKSCS) are involved in neuraminidase activity. 2 N-linked (GlcNAc...) asparagine; by host glycosylation sites follow: N499 and N511. An intrachain disulfide couples C535 to C544.

The protein belongs to the paramyxoviruses hemagglutinin-neuraminidase family. As to quaternary structure, homotetramer; composed of disulfide-linked homodimers. Interacts with F protein trimer.

Its subcellular location is the virion membrane. The protein localises to the host cell membrane. The catalysed reaction is Hydrolysis of alpha-(2-&gt;3)-, alpha-(2-&gt;6)-, alpha-(2-&gt;8)- glycosidic linkages of terminal sialic acid residues in oligosaccharides, glycoproteins, glycolipids, colominic acid and synthetic substrates.. Attaches the virus to sialic acid-containing cell receptors and thereby initiating infection. Binding of HN protein to the receptor induces a conformational change that allows the F protein to trigger virion/cell membranes fusion. In terms of biological role, neuraminidase activity ensures the efficient spread of the virus by dissociating the mature virions from the neuraminic acid containing glycoproteins. The polypeptide is Hemagglutinin-neuraminidase (HN) (Human parainfluenza 1 virus (strain Washington/1957) (HPIV-1)).